The sequence spans 870 residues: Importin subunit beta-1 (870 aa).

Position 2 is an N-acetylalanine (alanine 2). HEAT repeat units follow at residues glutamate 4–glutamine 33, leucine 35–leucine 67, methionine 87–glutamine 126, leucine 132–glutamate 161, valine 172–leucine 204, aspartate 214–threonine 249, alanine 255–glycine 304, phenylalanine 313–glycine 361, valine 365–leucine 395, leucine 403–phenylalanine 440, cysteine 456–glycine 492, threonine 498–arginine 535, serine 542–isoleucine 588, threonine 596–alanine 637, alanine 642–leucine 679, leucine 684–isoleucine 722, tryptophan 730–phenylalanine 776, and serine 826–isoleucine 868. An Importin N-terminal domain is found at alanine 23–alanine 103.

It belongs to the importin beta family. Importin beta-1 subfamily. Forms a complex with the importin subunits alpha IMPA1 or IMPA2, the nucleoporin NUP62 and the Ran-GTP-binding proteins RAN1, RAN2 or RAN3. Expressed in roots, cotyledons, leaves, stems, petals, stamen, stigma, siliques, embryos and guard cells.

The protein localises to the cytoplasm. It localises to the nucleus. Its function is as follows. Acts as a negative effector of drought tolerance. Involved in the regulation of stomatal closure and in the abscisic acid (ABA)-mediated pathway that lead to drought tolerance. Does not directly mediate nuclear import of ABI1 and ABI2 which are key regulators of the ABA signaling pathway. May be involved in nuclear translocation of other type 2C protein phosphatases that mediate ABA signaling. This chain is Importin subunit beta-1, found in Arabidopsis thaliana (Mouse-ear cress).